Reading from the N-terminus, the 359-residue chain is 4-hydroxy-2-oxovalerate aldolase 1 (359 aa).

The 253-residue stretch at 23-275 folds into the Pyruvate carboxyltransferase domain; that stretch reads VRVTDTSLRD…KTGIDFFDIA (253 aa). 31-32 is a substrate binding site; it reads RD. Asp-32 contributes to the Mn(2+) binding site. His-35 (proton acceptor) is an active-site residue. The substrate site is built by Ser-185 and His-214. His-214 and His-216 together coordinate Mn(2+). Tyr-305 contributes to the substrate binding site.

Belongs to the 4-hydroxy-2-oxovalerate aldolase family.

It carries out the reaction (S)-4-hydroxy-2-oxopentanoate = acetaldehyde + pyruvate. This Mycobacteroides abscessus (strain ATCC 19977 / DSM 44196 / CCUG 20993 / CIP 104536 / JCM 13569 / NCTC 13031 / TMC 1543 / L948) (Mycobacterium abscessus) protein is 4-hydroxy-2-oxovalerate aldolase 1.